The sequence spans 129 residues: Glycine cleavage system H protein (129 aa).

Positions 24-106 (TYTVGITEHA…YAGGWIFKIK (83 aa)) constitute a Lipoyl-binding domain. Position 65 is an N6-lipoyllysine (Lys65).

It belongs to the GcvH family. In terms of assembly, the glycine cleavage system is composed of four proteins: P, T, L and H. (R)-lipoate serves as cofactor.

The glycine cleavage system catalyzes the degradation of glycine. The H protein shuttles the methylamine group of glycine from the P protein to the T protein. This Escherichia coli O139:H28 (strain E24377A / ETEC) protein is Glycine cleavage system H protein.